The chain runs to 181 residues: Cytidylate kinase (181 aa).

7 to 15 contributes to the ATP binding site; the sequence is GPPGSGTTS.

This sequence belongs to the cytidylate kinase family. Type 2 subfamily.

It localises to the cytoplasm. It carries out the reaction CMP + ATP = CDP + ADP. The catalysed reaction is dCMP + ATP = dCDP + ADP. This Methanoculleus marisnigri (strain ATCC 35101 / DSM 1498 / JR1) protein is Cytidylate kinase.